A 186-amino-acid polypeptide reads, in one-letter code: MPLREFKIVVLGSGGVGKSALTVQFVQGIFVEKYDPTIEDSYRKQVEVDSNQCMLEILDTAGTEQFTAMRDLYMKNGQGFVLVYSIISNSTFNELPDLREQILRVKDCEDVPMVLVGNKCDLHDQRVISTEQGEELARKFGDCYFLEASAKNKVNVEQIFYNLIRQINRKNPVGPPSKAKSKCALL.

Residue 12–19 (GSGGVGKS) participates in GTP binding. An Effector region motif is present at residues 34-42 (YDPTIEDSY). Residues 59-63 (DTAGT) and 118-121 (NKCD) contribute to the GTP site. The residue at position 183 (Cys183) is a Cysteine methyl ester. A lipid anchor (S-geranylgeranyl cysteine) is attached at Cys183. A propeptide spans 184–186 (ALL) (removed in mature form).

This sequence belongs to the small GTPase superfamily. Ras family. In terms of assembly, interacts with ralGDS (only when rapA is in its GTP-bound state). Interacts with the Rap guanine nucleotide exchange factor glfB.

It is found in the cell membrane. It carries out the reaction GTP + H2O = GDP + phosphate + H(+). G protein of the Ras family that positively regulates phagocytosis and negatively regulates macropinocytosis. May be involved in the activation of guanylyl cyclase during the response to hyperosmotic conditions. Overexpressing cells generate alterations in cell shape and contractile responses. Involved in chemotaxis via regulation of the balance of Ras and Rap signaling at the leading edge of chemotaxing cells. The protein is Ras-related protein rapA (rapA) of Dictyostelium discoideum (Social amoeba).